The following is a 95-amino-acid chain: uncharacterized protein (95 aa).

A compositionally biased stretch (low complexity) spans 1–12; it reads MQNFMNNLSGGS. The tract at residues 1-27 is disordered; the sequence is MQNFMNNLSGGSNKEGGEKSNDFLSSA.

This is an uncharacterized protein from Schizosaccharomyces pombe (strain 972 / ATCC 24843) (Fission yeast).